Reading from the N-terminus, the 707-residue chain is Mitochondrial disaggregase (707 aa).

The N-terminal 36 residues, 1–36, are a transit peptide targeting the mitochondrion; it reads MLGSLVLRRKALAPRLLLRLLRSPTLRGHGGASGRN. The segment at 92–126 is autoinhibitory; that stretch reads PGPEETLPGQDSWNGVPSRAGLGMCALAAALVVHC. ANK repeat units follow at residues 133–162, 166–195, 265–295, and 298–327; these read NKDAALLEAARANNMQEVSRLLSEGADVNA, LGWTALMVAAINRNNSVVQVLLAAGADPNL, KGCTALHYAVLADDYRTVKELLDGGANPLQR, and MGHTPLDYAREGEVMKLLRTSEAKYQEKQR. ATP contacts are provided by His-346, Ile-348, Ser-383, Gly-384, Ile-385, Gly-386, Lys-387, Thr-388, Glu-455, and Asn-496. The interval 507–535 is regulatory; slows ATPase and disaggregase activities; it reads LQLRQEALEMSRNRIAENLGDVQISDKIT. Arg-561 is an ATP binding site. Lys-589 bears the N6-acetyllysine mark. Arg-620 serves as a coordination point for ATP.

It belongs to the ClpA/ClpB family. As to quaternary structure, homododecamer when substrate-bound; the homododecamer consists of 2 homohexamers stacked head-to-head via ANK repeat-mediated interactions. The active substrate-bound form is likely to exist in a dynamic equilibrium between homohexamers and homododecamers. Homotetradecamer in the unbound state which is remodeled upon substrate binding into the homododecamer. Interacts with PHB and PHB2. Interacts with MAVS; the interaction is enhanced by Sendai virus infection. In terms of processing, proteolytically cleaved by protease PARL. ATP-dependent protein disaggregase activity is stimulated by PARL-mediated cleavage of the N-terminal autoinhibitory peptide. As to expression, widely expressed (at protein level). Expressed in fetal, as well as in adult tissues, with highest levels in adult brain, including thalamus, hippocampus, occipital cortex and parietal cortex. Low expression in granulocytes.

The protein localises to the mitochondrion intermembrane space. It carries out the reaction ATP + H2O = ADP + phosphate + H(+). With respect to regulation, disaggregase activity is inhibited by ADP. Functions as a regulatory ATPase and participates in secretion/protein trafficking process. Has ATP-dependent protein disaggregase activity and is required to maintain the solubility of key mitochondrial proteins. Involved in mitochondrial-mediated antiviral innate immunity, activates RIG-I-mediated signal transduction and production of IFNB1 and pro-inflammatory cytokine IL6. Plays a role in granulocyte differentiation. This is Mitochondrial disaggregase from Homo sapiens (Human).